A 1083-amino-acid polypeptide reads, in one-letter code: Ubiquitin carboxyl-terminal hydrolase 1 (1083 aa).

A UBP-type zinc finger spans residues 30 to 165 (RSCVHFDKYV…KKDLLLEVVK (136 aa)). Residues cysteine 32, histidine 34, cysteine 56, cysteine 59, cysteine 95, cysteine 98, cysteine 103, histidine 115, histidine 119, histidine 125, cysteine 139, and cysteine 142 each contribute to the Zn(2+) site. The region spanning 202–1083 (RGLVNLGNTC…EAYILFYERI (882 aa)) is the USP domain. Catalysis depends on cysteine 211, which acts as the Nucleophile. Disordered regions lie at residues 387 to 424 (KDSEVVSAKPASDHNSTVPLFPSDHKIQSRPETSDNET) and 450 to 486 (GSTETLMHDNDRTGKTVPDKEDVRATQSNEETSASGI). Composition is skewed to basic and acidic residues over residues 409–419 (SDHKIQSRPET) and 455–473 (LMHDNDRTGKTVPDKEDVR). A compositionally biased stretch (polar residues) spans 474–485 (ATQSNEETSASG). Catalysis depends on histidine 1029, which acts as the Proton acceptor.

Belongs to the peptidase C19 family.

It carries out the reaction Thiol-dependent hydrolysis of ester, thioester, amide, peptide and isopeptide bonds formed by the C-terminal Gly of ubiquitin (a 76-residue protein attached to proteins as an intracellular targeting signal).. Functionally, recognizes and hydrolyzes the peptide bond at the C-terminal Gly of ubiquitin. Involved in the processing of poly-ubiquitin precursors as well as that of ubiquitinated proteins. Is involved in resistance to the arginine analog canavanine (CAN). The sequence is that of Ubiquitin carboxyl-terminal hydrolase 1 (UBP1) from Arabidopsis thaliana (Mouse-ear cress).